Consider the following 107-residue polypeptide: MIPGEYDIKDGEITLNENRKTLTLTVANTGDRPIQVGSHYHFFETNPALSFSRDATRGFRLNIAAGTAVRFEPGQDREVELVEIAGDKTVYGFRGEIMGELEGGSHE.

Belongs to the urease beta subunit family. Heterotrimer of UreA (gamma), UreB (beta) and UreC (alpha) subunits. Three heterotrimers associate to form the active enzyme.

It localises to the cytoplasm. It catalyses the reaction urea + 2 H2O + H(+) = hydrogencarbonate + 2 NH4(+). It participates in nitrogen metabolism; urea degradation; CO(2) and NH(3) from urea (urease route): step 1/1. This Teredinibacter turnerae (strain ATCC 39867 / T7901) protein is Urease subunit beta.